The chain runs to 369 residues: ATP-dependent 6-phosphofructokinase (369 aa).

Residues Gly15, 81–82 (KG), and 108–111 (GDGS) each bind ATP. Position 109 (Asp109) interacts with Mg(2+). Substrate contacts are provided by residues 132–134 (TID), Arg169, 176–178 (MGR), Glu230, Arg266, and 272–275 (HIQR). Residue Asp134 is the Proton acceptor of the active site.

Belongs to the phosphofructokinase type A (PFKA) family. Mixed-substrate PFK group III subfamily. In terms of assembly, homodimer or homotetramer. Mg(2+) serves as cofactor.

It is found in the cytoplasm. It carries out the reaction beta-D-fructose 6-phosphate + ATP = beta-D-fructose 1,6-bisphosphate + ADP + H(+). The protein operates within carbohydrate degradation; glycolysis; D-glyceraldehyde 3-phosphate and glycerone phosphate from D-glucose: step 3/4. Catalyzes the phosphorylation of D-fructose 6-phosphate to fructose 1,6-bisphosphate by ATP, the first committing step of glycolysis. The polypeptide is ATP-dependent 6-phosphofructokinase (Thermosynechococcus vestitus (strain NIES-2133 / IAM M-273 / BP-1)).